The chain runs to 508 residues: UTP--glucose-1-phosphate uridylyltransferase (508 aa).

Position 13 is a phosphoserine (S13). UTP is bound by residues 113 to 116 (LNGG), K127, Q190, and G222. Substrate is bound at residue 115 to 116 (GG). Position 127 (K127) interacts with Mg(2+). Substrate contacts are provided by residues H223 and 251–253 (NID). UTP is bound by residues D253 and K396. A Mg(2+)-binding site is contributed by D253. Residue K396 is part of the active site. At T426 the chain carries Phosphothreonine. S434 is modified (phosphoserine). K438 carries the post-translational modification N6-acetyllysine. A phosphoserine mark is found at S448 and S461. An oligomerization region spans residues 457 to 508 (HLTVSGDVTFGKNVSLKGTVIIIANHGDRIDIPPGAVLENKIVSGNLRILDH). The segment at 502-503 (NL) is critical for end-to-end subunit interaction.

This sequence belongs to the UDPGP type 1 family. Homooctamer.

Its subcellular location is the cytoplasm. The catalysed reaction is alpha-D-glucose 1-phosphate + UTP + H(+) = UDP-alpha-D-glucose + diphosphate. The protein operates within glycan biosynthesis; glycogen biosynthesis. UTP--glucose-1-phosphate uridylyltransferase catalyzing the conversion of glucose-1-phosphate into UDP-glucose, a crucial precursor for the production of glycogen. This Mus musculus (Mouse) protein is UTP--glucose-1-phosphate uridylyltransferase (Ugp2).